We begin with the raw amino-acid sequence, 204 residues long: Pyrrolidone-carboxylate peptidase (204 aa).

Catalysis depends on residues Glu78, Cys141, and His165.

This sequence belongs to the peptidase C15 family. Homotetramer.

The protein localises to the cytoplasm. The catalysed reaction is Release of an N-terminal pyroglutamyl group from a polypeptide, the second amino acid generally not being Pro.. Its function is as follows. Removes 5-oxoproline from various penultimate amino acid residues except L-proline. This Levilactobacillus brevis (strain ATCC 367 / BCRC 12310 / CIP 105137 / JCM 1170 / LMG 11437 / NCIMB 947 / NCTC 947) (Lactobacillus brevis) protein is Pyrrolidone-carboxylate peptidase.